We begin with the raw amino-acid sequence, 344 residues long: Selenide, water dikinase (344 aa).

Residue Sec-16 is part of the active site. Sec-16 is a non-standard amino acid (selenocysteine). ATP contacts are provided by residues Lys-19 and 46–48; that span reads TND. Residue Asp-49 coordinates Mg(2+). ATP is bound by residues Asp-66, Asp-89, and 135–137; that span reads GHT. Asp-89 is a binding site for Mg(2+). Residue Asp-223 participates in Mg(2+) binding.

It belongs to the selenophosphate synthase 1 family. Class I subfamily. As to quaternary structure, homodimer. Mg(2+) serves as cofactor.

It carries out the reaction hydrogenselenide + ATP + H2O = selenophosphate + AMP + phosphate + 2 H(+). Functionally, synthesizes selenophosphate from selenide and ATP. This Caldanaerobacter subterraneus subsp. tengcongensis (strain DSM 15242 / JCM 11007 / NBRC 100824 / MB4) (Thermoanaerobacter tengcongensis) protein is Selenide, water dikinase.